The primary structure comprises 130 residues: Small ribosomal subunit protein uS9 (130 aa).

A disordered region spans residues 105–130; it reads TRDSRMKERKKPGLRGARRAPQFSKR. A compositionally biased stretch (basic residues) spans 111 to 130; sequence KERKKPGLRGARRAPQFSKR.

The protein belongs to the universal ribosomal protein uS9 family.

The sequence is that of Small ribosomal subunit protein uS9 from Lysinibacillus sphaericus (strain C3-41).